The primary structure comprises 144 residues: Universal stress protein F (144 aa).

The protein belongs to the universal stress protein A family. Homodimer.

This chain is Universal stress protein F (uspF), found in Salmonella typhi.